The following is a 205-amino-acid chain: Protein phosphatase inhibitor 2 (205 aa).

Disordered stretches follow at residues 1 to 46 (MAAS…KSQK) and 64 to 205 (GLMK…SQSS). An N-acetylalanine modification is found at Ala-2. 2 required for binding PPP1CC regions span residues 12-17 (KGILKN) and 43-55 (KSQK…ILAT). The segment covering 17–26 (NKTSSTSSRV) has biased composition (polar residues). A compositionally biased stretch (basic and acidic residues) spans 35-46 (SVDEELSKKSQK). A Phosphoserine; by ATM modification is found at Ser-44. Thr-73 is subject to Phosphothreonine; by GSK3. Positions 80-91 (GDDDDAYSDTET) are enriched in acidic residues. Ser-87 carries the phosphoserine modification. A phosphothreonine mark is found at Thr-89, Thr-92, and Thr-96. A compositionally biased stretch (basic and acidic residues) spans 110 to 120 (SEPKYRIREQE). Ser-121, Ser-122, Ser-127, and Ser-130 each carry phosphoserine. A compositionally biased stretch (acidic residues) spans 121-130 (SSGEEDSDLS). Residues 131 to 143 (PEEREKKRQFEMK) are compositionally biased toward basic and acidic residues. The interval 147 to 150 (HYNE) is required for binding PPP1CC catalytic center, displacing metal ions and inhibition of PPP1CC catalytic activity. A compositionally biased stretch (acidic residues) spans 167–179 (DDEEDEEMSETAD). Residues 182-205 (SMNTEESNQGSTPSDQRQNKSQSS) show a composition bias toward polar residues.

The protein belongs to the protein phosphatase inhibitor 2 family. Heterodimer with PP1. Phosphorylation on Ser-44 by ATM activates PP1 by dissociating the PP1-PPP1R2 complex. Phosphorylation on Thr-73 by GSK3 activates PP1 by dissociating the PP1-PPP1R2 complex.

Functionally, inhibitor of protein-phosphatase 1. This chain is Protein phosphatase inhibitor 2 (PPP1R2), found in Oryctolagus cuniculus (Rabbit).